The primary structure comprises 151 residues: Mating pheromone 3 (151 aa).

Residues 1-16 form the signal peptide; the sequence is MKAIFIILAILMVTQA. Positions 17–52 are excised as a propeptide; sequence FKMTSKVNTKLQSQIQSKFQSKNKLASTFQTSSQLK.

The protein resides in the secreted. Mating ciliate pheromones (or gamones) are diffusible extracellular communication signals that distinguish different intraspecific classes of cells commonly referred to as 'mating types'. They prepare the latter for conjugation by changing their cell surface properties. The sequence is that of Mating pheromone 3 (PHR3) from Euplotoides octocarinatus (Freshwater ciliate).